The primary structure comprises 373 residues: Alpha-ketoglutarate dependent kainoid synthase (373 aa).

Positions 204–320 (TINSKKMFFT…RSSLITFYEP (117 aa)) constitute a Fe2OG dioxygenase domain. The Fe cation site is built by His-235, Asp-237, and His-296. Residue Arg-311 coordinates 2-oxoglutarate.

It belongs to the iron/ascorbate-dependent oxidoreductase family. Fe(2+) is required as a cofactor.

The catalysed reaction is N-(7'-carboxy-7'-demethylgeranyl)-L-glutamate + 2-oxoglutarate + O2 = isodomoate A + succinate + CO2 + H2O. It carries out the reaction N-geranyl-L-glutamate + 2-oxoglutarate + O2 = dainate A + succinate + CO2 + H2O. The protein operates within secondary metabolite biosynthesis. Its function is as follows. Iron/ascorbate-dependent oxidoreductase: part of the gene cluster that mediates the biosynthesis of domoic acid (DA) and derivatives, natural products with neurochemical activity acting as ionotropic glutamate receptor (iGluR) agonists, thus being neurotoxins causing amnesic shellfish poisoning (ASP). Catalyzes the conversion of 7'-N-carboxy-L-geranyl-L-glutamic acid (cNGG) to isodomoic acid-A. Also mediates the conversion of N-geranyl-L-glutamic acid (L-NGG) to dainic acid A. The protein is Alpha-ketoglutarate dependent kainoid synthase of Pseudo-nitzschia multiseries (Marine planktonic diatom).